A 280-amino-acid chain; its full sequence is Dihydropteroate synthase (280 aa).

The Pterin-binding domain occupies methionine 1–lysine 265. Residue asparagine 13 participates in Mg(2+) binding. (7,8-dihydropterin-6-yl)methyl diphosphate contacts are provided by residues aspartate 86, asparagine 105, aspartate 177, lysine 213, and arginine 253–histidine 255.

Belongs to the DHPS family. As to quaternary structure, homodimer. Requires Mg(2+) as cofactor.

The enzyme catalyses (7,8-dihydropterin-6-yl)methyl diphosphate + 4-aminobenzoate = 7,8-dihydropteroate + diphosphate. It participates in cofactor biosynthesis; tetrahydrofolate biosynthesis; 7,8-dihydrofolate from 2-amino-4-hydroxy-6-hydroxymethyl-7,8-dihydropteridine diphosphate and 4-aminobenzoate: step 1/2. Catalyzes the condensation of para-aminobenzoate (pABA) with 6-hydroxymethyl-7,8-dihydropterin diphosphate (DHPt-PP) to form 7,8-dihydropteroate (H2Pte), the immediate precursor of folate derivatives. The polypeptide is Dihydropteroate synthase (folP1) (Mycobacterium bovis (strain ATCC BAA-935 / AF2122/97)).